The sequence spans 440 residues: Signal recognition particle 54 kDa protein (440 aa).

Residues 104–111 (GLQGSGKT), 184–188 (DTAGR), and 242–245 (TKLD) each bind GTP.

The protein belongs to the GTP-binding SRP family. SRP54 subfamily. Part of the signal recognition particle protein translocation system, which is composed of SRP and FtsY. Archaeal SRP consists of a 7S RNA molecule of 300 nucleotides and two protein subunits: SRP54 and SRP19.

The protein resides in the cytoplasm. The catalysed reaction is GTP + H2O = GDP + phosphate + H(+). Functionally, involved in targeting and insertion of nascent membrane proteins into the cytoplasmic membrane. Binds to the hydrophobic signal sequence of the ribosome-nascent chain (RNC) as it emerges from the ribosomes. The SRP-RNC complex is then targeted to the cytoplasmic membrane where it interacts with the SRP receptor FtsY. The protein is Signal recognition particle 54 kDa protein of Methanosarcina acetivorans (strain ATCC 35395 / DSM 2834 / JCM 12185 / C2A).